Reading from the N-terminus, the 422-residue chain is Serine--tRNA ligase (422 aa).

229-231 (TAE) provides a ligand contact to L-serine. 260-262 (RAE) is an ATP binding site. E283 contributes to the L-serine binding site. 347–350 (EISS) contributes to the ATP binding site. S383 serves as a coordination point for L-serine.

The protein belongs to the class-II aminoacyl-tRNA synthetase family. Type-1 seryl-tRNA synthetase subfamily. In terms of assembly, homodimer. The tRNA molecule binds across the dimer.

It is found in the cytoplasm. It catalyses the reaction tRNA(Ser) + L-serine + ATP = L-seryl-tRNA(Ser) + AMP + diphosphate + H(+). It carries out the reaction tRNA(Sec) + L-serine + ATP = L-seryl-tRNA(Sec) + AMP + diphosphate + H(+). It participates in aminoacyl-tRNA biosynthesis; selenocysteinyl-tRNA(Sec) biosynthesis; L-seryl-tRNA(Sec) from L-serine and tRNA(Sec): step 1/1. Catalyzes the attachment of serine to tRNA(Ser). Is also able to aminoacylate tRNA(Sec) with serine, to form the misacylated tRNA L-seryl-tRNA(Sec), which will be further converted into selenocysteinyl-tRNA(Sec). This chain is Serine--tRNA ligase, found in Heliobacterium modesticaldum (strain ATCC 51547 / Ice1).